A 359-amino-acid chain; its full sequence is Peptide chain release factor 1 (359 aa).

At Gln-235 the chain carries N5-methylglutamine. The span at 282-307 (RQRADSERSADRKSQVGSGDRSERIR) shows a compositional bias: basic and acidic residues. Positions 282–309 (RQRADSERSADRKSQVGSGDRSERIRTY) are disordered.

The protein belongs to the prokaryotic/mitochondrial release factor family. Methylated by PrmC. Methylation increases the termination efficiency of RF1.

The protein localises to the cytoplasm. Peptide chain release factor 1 directs the termination of translation in response to the peptide chain termination codons UAG and UAA. The polypeptide is Peptide chain release factor 1 (Allorhizobium ampelinum (strain ATCC BAA-846 / DSM 112012 / S4) (Agrobacterium vitis (strain S4))).